A 486-amino-acid chain; its full sequence is ATP-dependent rRNA helicase RRP3 (486 aa).

The disordered stretch occupies residues 1–58 (MNGAKRRKVAQDTPRNTKPVAQEKPARAEPKPSSDEESEEESATLEEPSAEETAVDAP). Over residues 24–34 (KPARAEPKPSS) the composition is skewed to basic and acidic residues. Residues 35 to 54 (DEESEEESATLEEPSAEETA) show a composition bias toward acidic residues. The Q motif motif lies at 60 to 88 (KTFKDLGVNDALCEACEKLNYKYPTPIQE). The Helicase ATP-binding domain maps to 91 to 262 (IPVALQGRDI…RASLRDPVKV (172 aa)). Position 104-111 (104-111 (AETGSGKT)) interacts with ATP. The DEAD box signature appears at 210–213 (DEAD). A Helicase C-terminal domain is found at 286–434 (QKDVHLIYLI…EYPTEKEEVM (149 aa)). Composition is skewed to basic and acidic residues over residues 451–460 (MKSFTEERGK) and 476–486 (RGRDDMDREEG). The interval 451–486 (MKSFTEERGKKGSTLKGGRGKKGGKRGRDDMDREEG) is disordered.

This sequence belongs to the DEAD box helicase family. DDX47/RRP3 subfamily. In terms of assembly, interacts with the SSU processome.

Its subcellular location is the nucleus. It catalyses the reaction ATP + H2O = ADP + phosphate + H(+). Its function is as follows. ATP-dependent rRNA helicase required for pre-ribosomal RNA processing. Involved in the maturation of the 35S-pre-rRNA and to its cleavage to mature 18S rRNA. This Gibberella zeae (strain ATCC MYA-4620 / CBS 123657 / FGSC 9075 / NRRL 31084 / PH-1) (Wheat head blight fungus) protein is ATP-dependent rRNA helicase RRP3.